The primary structure comprises 73 residues: Ubiquitin-like modifier HUB1 (73 aa).

One can recognise a Ubiquitin-like domain in the interval 1 to 73 (MIEVVVNDRL…DQTNLELYYL (73 aa)).

Functionally, forms conjugate with SPH1 and HBT1. Involved in morphogenesis. This Saccharomyces cerevisiae (strain ATCC 204508 / S288c) (Baker's yeast) protein is Ubiquitin-like modifier HUB1 (HUB1).